The sequence spans 1128 residues: Inactive phospholipase C-like protein 2 (1128 aa).

The segment at 1 to 129 is disordered; the sequence is MAECGRGAAG…KKTVSFSSMP (129 aa). N-acetylalanine is present on alanine 2. Phosphoserine is present on serine 16. Low complexity predominate over residues 20 to 30; the sequence is ALGAKGALKAG. Residues 31–43 show a composition bias toward gly residues; that stretch reads AGEGGGGGGGGRL. Threonine 85 is modified (phosphothreonine). A PH domain is found at 142 to 252; that stretch reads NSMVEGSELK…WVTGLRYLIS (111 aa). Positions 427–571 constitute a PI-PLC X-box domain; it reads QDMKQPLSHY…LKGKILIKAK (145 aa). Threonine 585 carries the post-translational modification Phosphothreonine. Residues 619–735 enclose the PI-PLC Y-box domain; the sequence is LSELVSICKS…GYVLRPAIMR (117 aa). Positions 735–864 constitute a C2 domain; the sequence is REEVSFFSAN…TGYRHVPLQS (130 aa). Residues 1100-1128 are disordered; it reads KPGTENSEAQKPRRSLEAIPEKASDENGD. Positions 1107–1128 are enriched in basic and acidic residues; sequence EAQKPRRSLEAIPEKASDENGD. Serine 1114 bears the Phosphoserine mark.

In terms of tissue distribution, ubiquitously expressed, with a strong expression in skeletal muscle.

It localises to the cytoplasm. May play an role in the regulation of Ins(1,4,5)P3 around the endoplasmic reticulum. The chain is Inactive phospholipase C-like protein 2 (Plcl2) from Mus musculus (Mouse).